Consider the following 597-residue polypeptide: Large ribosomal subunit assembly factor BipA (597 aa).

Residues 3–198 enclose the tr-type G domain; the sequence is LPIRNVAIIA…AILHHVPPPA (196 aa). Residues 15–20 and 128–131 contribute to the GTP site; these read DHGKTT and NKID.

The protein belongs to the TRAFAC class translation factor GTPase superfamily. Classic translation factor GTPase family. BipA subfamily. As to quaternary structure, monomer.

Its subcellular location is the cytoplasm. It catalyses the reaction GTP + H2O = GDP + phosphate + H(+). A 50S ribosomal subunit assembly protein with GTPase activity, required for 50S subunit assembly at low temperatures, may also play a role in translation. Binds GTP and analogs. Binds the 70S ribosome between the 30S and 50S subunits, in a similar position as ribosome-bound EF-G; it contacts a number of ribosomal proteins, both rRNAs and the A-site tRNA. This is Large ribosomal subunit assembly factor BipA from Synechocystis sp. (strain ATCC 27184 / PCC 6803 / Kazusa).